Reading from the N-terminus, the 447-residue chain is Exodeoxyribonuclease 7 large subunit (447 aa).

This sequence belongs to the XseA family. As to quaternary structure, heterooligomer composed of large and small subunits.

The protein resides in the cytoplasm. It carries out the reaction Exonucleolytic cleavage in either 5'- to 3'- or 3'- to 5'-direction to yield nucleoside 5'-phosphates.. Functionally, bidirectionally degrades single-stranded DNA into large acid-insoluble oligonucleotides, which are then degraded further into small acid-soluble oligonucleotides. The protein is Exodeoxyribonuclease 7 large subunit of Thioalkalivibrio sulfidiphilus (strain HL-EbGR7).